The sequence spans 545 residues: Chaperonin GroEL (545 aa).

ATP contacts are provided by residues 29-32 (TLGP), lysine 50, 86-90 (DGTTT), glycine 415, and aspartate 495.

The protein belongs to the chaperonin (HSP60) family. Forms a cylinder of 14 subunits composed of two heptameric rings stacked back-to-back. Interacts with the co-chaperonin GroES.

The protein localises to the cytoplasm. It carries out the reaction ATP + H2O + a folded polypeptide = ADP + phosphate + an unfolded polypeptide.. Its function is as follows. Together with its co-chaperonin GroES, plays an essential role in assisting protein folding. The GroEL-GroES system forms a nano-cage that allows encapsulation of the non-native substrate proteins and provides a physical environment optimized to promote and accelerate protein folding. This chain is Chaperonin GroEL, found in Phocaeicola vulgatus (strain ATCC 8482 / DSM 1447 / JCM 5826 / CCUG 4940 / NBRC 14291 / NCTC 11154) (Bacteroides vulgatus).